Reading from the N-terminus, the 527-residue chain is ATP synthase subunit alpha (527 aa).

172-179 (GDRQTGKT) provides a ligand contact to ATP.

The protein belongs to the ATPase alpha/beta chains family. As to quaternary structure, F-type ATPases have 2 components, CF(1) - the catalytic core - and CF(0) - the membrane proton channel. CF(1) has five subunits: alpha(3), beta(3), gamma(1), delta(1), epsilon(1). CF(0) has three main subunits: a(1), b(2) and c(9-12). The alpha and beta chains form an alternating ring which encloses part of the gamma chain. CF(1) is attached to CF(0) by a central stalk formed by the gamma and epsilon chains, while a peripheral stalk is formed by the delta and b chains.

The protein localises to the cell inner membrane. It carries out the reaction ATP + H2O + 4 H(+)(in) = ADP + phosphate + 5 H(+)(out). In terms of biological role, produces ATP from ADP in the presence of a proton gradient across the membrane. The alpha chain is a regulatory subunit. The sequence is that of ATP synthase subunit alpha from Bacteroides fragilis (strain ATCC 25285 / DSM 2151 / CCUG 4856 / JCM 11019 / LMG 10263 / NCTC 9343 / Onslow / VPI 2553 / EN-2).